Reading from the N-terminus, the 50-residue chain is Large ribosomal subunit protein bL32c (50 aa).

Belongs to the bacterial ribosomal protein bL32 family.

It is found in the plastid. The sequence is that of Large ribosomal subunit protein bL32c (rpl32) from Euglena longa (Euglenophycean alga).